The primary structure comprises 394 residues: Elongation factor Tu (394 aa).

The tr-type G domain occupies lysine 10 to valine 204. Residues glycine 19–threonine 26 are G1. Glycine 19–threonine 26 contacts GTP. Threonine 26 provides a ligand contact to Mg(2+). The interval glycine 60–serine 64 is G2. Residues aspartate 81–glycine 84 are G3. GTP is bound by residues aspartate 81–histidine 85 and asparagine 136–aspartate 139. The interval asparagine 136 to aspartate 139 is G4. The G5 stretch occupies residues serine 174–leucine 176.

The protein belongs to the TRAFAC class translation factor GTPase superfamily. Classic translation factor GTPase family. EF-Tu/EF-1A subfamily. As to quaternary structure, monomer.

Its subcellular location is the cytoplasm. It catalyses the reaction GTP + H2O = GDP + phosphate + H(+). Functionally, GTP hydrolase that promotes the GTP-dependent binding of aminoacyl-tRNA to the A-site of ribosomes during protein biosynthesis. This Rickettsia parkeri protein is Elongation factor Tu.